Consider the following 143-residue polypeptide: MIRKSKKITKMRGSRTCGYGEAKKHRGAGHRGGRGNAGHQKHKWLSVCKFNPDYFGKYGFNRNPCLIKQLETINIGELEEYILKYKDAFQVEDGKVVVDATTIGYEKVLGKGRISTAMVVKAVEFSEGAKEKIEAAGGEFVEL.

2 stretches are compositionally biased toward basic residues: residues 1 to 13 (MIRK…KMRG) and 23 to 38 (KKHR…GNAG). The interval 1–38 (MIRKSKKITKMRGSRTCGYGEAKKHRGAGHRGGRGNAG) is disordered.

This sequence belongs to the universal ribosomal protein uL15 family. In terms of assembly, part of the 50S ribosomal subunit.

Functionally, binds to the 23S rRNA. This chain is Large ribosomal subunit protein uL15, found in Methanococcus maripaludis (strain C5 / ATCC BAA-1333).